The following is a 1227-amino-acid chain: Pesticidal crystal protein Cry1Be (1227 aa).

It belongs to the delta endotoxin family.

Its function is as follows. Promotes colloidosmotic lysis by binding to the midgut epithelial cells of many lepidopteran larvae. The polypeptide is Pesticidal crystal protein Cry1Be (cry1Be) (Bacillus thuringiensis).